The chain runs to 332 residues: Methionine synthase (332 aa).

3 residues coordinate Zn(2+): H211, C213, and C296.

This sequence belongs to the archaeal MetE family. Zn(2+) is required as a cofactor.

It participates in amino-acid biosynthesis; L-methionine biosynthesis via de novo pathway. Catalyzes the transfer of a methyl group to L-homocysteine resulting in methionine formation. The physiological methyl donor is unknown. This Saccharolobus islandicus (strain Y.N.15.51 / Yellowstone #2) (Sulfolobus islandicus) protein is Methionine synthase.